The primary structure comprises 216 residues: Phosphatidylserine decarboxylase proenzyme (216 aa).

Ser183 serves as the catalytic Schiff-base intermediate with substrate; via pyruvic acid. Position 183 is a pyruvic acid (Ser); by autocatalysis (Ser183).

Belongs to the phosphatidylserine decarboxylase family. PSD-A subfamily. As to quaternary structure, heterodimer of a large membrane-associated beta subunit and a small pyruvoyl-containing alpha subunit. It depends on pyruvate as a cofactor. In terms of processing, is synthesized initially as an inactive proenzyme. Formation of the active enzyme involves a self-maturation process in which the active site pyruvoyl group is generated from an internal serine residue via an autocatalytic post-translational modification. Two non-identical subunits are generated from the proenzyme in this reaction, and the pyruvate is formed at the N-terminus of the alpha chain, which is derived from the carboxyl end of the proenzyme. The post-translation cleavage follows an unusual pathway, termed non-hydrolytic serinolysis, in which the side chain hydroxyl group of the serine supplies its oxygen atom to form the C-terminus of the beta chain, while the remainder of the serine residue undergoes an oxidative deamination to produce ammonia and the pyruvoyl prosthetic group on the alpha chain.

It is found in the cell membrane. It carries out the reaction a 1,2-diacyl-sn-glycero-3-phospho-L-serine + H(+) = a 1,2-diacyl-sn-glycero-3-phosphoethanolamine + CO2. It functions in the pathway phospholipid metabolism; phosphatidylethanolamine biosynthesis; phosphatidylethanolamine from CDP-diacylglycerol: step 2/2. In terms of biological role, catalyzes the formation of phosphatidylethanolamine (PtdEtn) from phosphatidylserine (PtdSer). This Cupriavidus taiwanensis (strain DSM 17343 / BCRC 17206 / CCUG 44338 / CIP 107171 / LMG 19424 / R1) (Ralstonia taiwanensis (strain LMG 19424)) protein is Phosphatidylserine decarboxylase proenzyme.